A 313-amino-acid polypeptide reads, in one-letter code: Vacuolar membrane protein ZYRO0A01628g (313 aa).

Positions 22-37 (SASKTSSHTSKTSYSA) are enriched in low complexity. Positions 22–48 (SASKTSSHTSKTSYSAVVTPPSSDGNP) are disordered. A helical transmembrane segment spans residues 59 to 79 (GLIYIIVGGTAAAIFAFIILW). Positions 221–234 (TSLPSASESSSNLL) are enriched in low complexity. Residues 221 to 313 (TSLPSASESS…LLEGNDDGTT (93 aa)) are disordered. Over residues 235–247 (DRPERTASPERKP) the composition is skewed to basic and acidic residues. Basic residues predominate over residues 248-257 (KAYGRYHQRN). Residues 285–301 (NVNNNNKKHGTTPSRFL) show a composition bias toward polar residues.

It belongs to the PRM5 family.

It localises to the vacuole membrane. The chain is Vacuolar membrane protein ZYRO0A01628g from Zygosaccharomyces rouxii (strain ATCC 2623 / CBS 732 / NBRC 1130 / NCYC 568 / NRRL Y-229).